A 586-amino-acid chain; its full sequence is RNA-directed RNA polymerase subunit beta (586 aa).

The RdRp catalytic domain maps to 259 to 391 (VRAYSGSCSN…TNEKKTFFDG (133 aa)). Mg(2+) is bound by residues aspartate 274, aspartate 359, and aspartate 360.

Homodimer; the replicase complex can dimerize. Part of the viral RNA-dependent RNA polymerase complex, the other subunits are the host ribosomal protein S1, EF-Tu and EF-Ts. S1 is needed for the initiation of genomic RNA (+)-strand replication. Mg(2+) is required as a cofactor.

The catalysed reaction is RNA(n) + a ribonucleoside 5'-triphosphate = RNA(n+1) + diphosphate. This is the catalytic subunit of the viral RNA-dependent RNA polymerase complex. This complex is involved in viral RNA replication that produces (+)-stranded genomes via a complementary, (-)-stranded intermediate. Binds RNA cooperatively with the host ribosomal protein S1. The polypeptide is RNA-directed RNA polymerase subunit beta (Escherichia coli).